A 347-amino-acid polypeptide reads, in one-letter code: Heat-inducible transcription repressor HrcA (347 aa).

This sequence belongs to the HrcA family.

Its function is as follows. Negative regulator of class I heat shock genes (grpE-dnaK-dnaJ and groELS operons). Prevents heat-shock induction of these operons. The polypeptide is Heat-inducible transcription repressor HrcA (Lactococcus lactis subsp. cremoris (strain SK11)).